The following is a 1159-amino-acid chain: PAN2-PAN3 deadenylation complex catalytic subunit pan2 (1159 aa).

A WD repeat occupies 276–315; sequence ANVSFMLGIDISPSGEALAINDAECMVHLWGSPAKIHFNE. A linker region spans residues 316–451; it reads MSKEVELADV…GAKLNGEAED (136 aa). The region spanning 452-821 is the USP domain; that stretch reads DPLLKYSNVE…VPCVLAFQVK (370 aa). The region spanning 872-1048 is the Exonuclease domain; it reads LDTEFVDLEK…IEDARMALRL (177 aa). 4 residues coordinate a divalent metal cation: D873, E875, D982, and D1041. Residues 1094-1159 are disordered; sequence TAVTMQNTNS…GDFFGGSPLK (66 aa). A compositionally biased stretch (polar residues) spans 1096–1106; that stretch reads VTMQNTNSGRN. The segment covering 1107-1128 has biased composition (low complexity); that stretch reads TPTVPDAAGAPAVPASAPTTPG. Over residues 1143–1153 the composition is skewed to gly residues; sequence TFSGPGAGDFF.

Belongs to the peptidase C19 family. PAN2 subfamily. In terms of assembly, forms a heterotrimer with an asymmetric homodimer of the regulatory subunit pan3 to form the poly(A)-nuclease (PAN) deadenylation complex. A divalent metal cation serves as cofactor.

The protein localises to the cytoplasm. The enzyme catalyses Exonucleolytic cleavage of poly(A) to 5'-AMP.. Its activity is regulated as follows. Positively regulated by the regulatory subunit pan3. Catalytic subunit of the poly(A)-nuclease (PAN) deadenylation complex, one of two cytoplasmic mRNA deadenylases involved in mRNA turnover. PAN specifically shortens poly(A) tails of RNA and the activity is stimulated by poly(A)-binding protein pab1. PAN deadenylation is followed by rapid degradation of the shortened mRNA tails by the CCR4-NOT complex. Deadenylated mRNAs are then degraded by two alternative mechanisms, namely exosome-mediated 3'-5' exonucleolytic degradation, or deadenylation-dependent mRNA decaping and subsequent 5'-3' exonucleolytic degradation by xrn1. May also be involved in post-transcriptional maturation of mRNA poly(A) tails. This chain is PAN2-PAN3 deadenylation complex catalytic subunit pan2, found in Aspergillus terreus (strain NIH 2624 / FGSC A1156).